The sequence spans 59 residues: Large ribosomal subunit protein uL30 (59 aa).

The protein belongs to the universal ribosomal protein uL30 family. In terms of assembly, part of the 50S ribosomal subunit.

The chain is Large ribosomal subunit protein uL30 from Escherichia coli (strain UTI89 / UPEC).